Here is a 294-residue protein sequence, read N- to C-terminus: Ribosomal protein L11 methyltransferase (294 aa).

S-adenosyl-L-methionine contacts are provided by Thr-145, Gly-166, Asp-188, and Asn-230.

It belongs to the methyltransferase superfamily. PrmA family.

It is found in the cytoplasm. The catalysed reaction is L-lysyl-[protein] + 3 S-adenosyl-L-methionine = N(6),N(6),N(6)-trimethyl-L-lysyl-[protein] + 3 S-adenosyl-L-homocysteine + 3 H(+). Methylates ribosomal protein L11. This is Ribosomal protein L11 methyltransferase from Glaesserella parasuis serovar 5 (strain SH0165) (Haemophilus parasuis).